The following is a 220-amino-acid chain: UPF0319 protein CKO_02102 (220 aa).

Residues 1 to 20 (MKTGIITMLFVLYLPVTAFA) form the signal peptide.

Belongs to the UPF0319 family.

The sequence is that of UPF0319 protein CKO_02102 from Citrobacter koseri (strain ATCC BAA-895 / CDC 4225-83 / SGSC4696).